The chain runs to 679 residues: MHSTHPYIYDVIVVGAGHAGCEAAHAAARMGCRTLLLTIDLDKLAHMSCNPSIGGPAKGHLVREIDALGGLMGRVTDRTFIQIRLLNESKGPAVQAPRAQADKRLYAKVMKETLETIPNLDLRQAMIERIILPRPINRNGSDTDDAEALCPGHYAVVTHTRRIYQCRALVLTTGTFLRGRAITGDAIWGAGRAGEAPATALGEDLAALGFPLVRLKTGTPPRIDARTIDFSLTSVQHGSATPLFFGFYYRALNEAPPEPAFGGPPASAYPEPLLDAWRPQLPCYLVHTTPEFHEIVRRNLDRAPLFSGIIEGVGPRYCPSIEDKIVRFADKERHGLFLEPEGWSTHEVYVQGCNTSLPEDVQWAMLRSIPALRRVELMRAGYAIEYDALATGEIAADMSSRRAPGLFFAGQINGTTGYEEAAAQGLMAGINAARFVQGKPSVLLRRDEAYIGVLIDDLVTKEIREPYRMFTSRAEHRLLLRADNADLRLTPLAGELGLVDRERVAVVERKREEVERLLAVLRGKRLYPSAAINARLSAAGIAPLTGEMSAEEVLRRPEVRYRQLQPALDLPACEADVAEQVDIEAKYSGYLLKQQREVERLRRMESRRIPPDFDFAALRGLRNEARQTLQRFRPATIGQAARLAGINPADIALLLVALERQTRQATPVETPHPSLPHTG.

15–20 (GAGHAG) serves as a coordination point for FAD. 314–328 (GPRYCPSIEDKIVRF) provides a ligand contact to NAD(+).

The protein belongs to the MnmG family. Homodimer. Heterotetramer of two MnmE and two MnmG subunits. Requires FAD as cofactor.

It is found in the cytoplasm. Functionally, NAD-binding protein involved in the addition of a carboxymethylaminomethyl (cmnm) group at the wobble position (U34) of certain tRNAs, forming tRNA-cmnm(5)s(2)U34. In Roseiflexus sp. (strain RS-1), this protein is tRNA uridine 5-carboxymethylaminomethyl modification enzyme MnmG.